The chain runs to 538 residues: Cytochrome c-552 (538 aa).

The signal sequence occupies residues 1–55 (MKIYLRFVWILIIILNFLLNLFITTNGVIIVNAFKKSLIVAASFASLSLFNSATA). Histidine 133 is a heme c binding site. Cysteine 161, cysteine 164, and lysine 165 together coordinate heme. Heme c-binding residues include cysteine 199, cysteine 202, histidine 203, cysteine 264, cysteine 267, and histidine 268. Ca(2+)-binding residues include glutamate 270, tyrosine 271, lysine 316, and glutamine 318. Tyrosine 271 contributes to the substrate binding site. Histidine 319 serves as a coordination point for substrate. Residues histidine 330, cysteine 337, cysteine 340, histidine 341, histidine 356, cysteine 369, cysteine 372, histidine 373, and histidine 448 each coordinate heme c.

This sequence belongs to the cytochrome c-552 family. Requires Ca(2+) as cofactor. Heme c is required as a cofactor.

It localises to the periplasm. It catalyses the reaction 6 Fe(III)-[cytochrome c] + NH4(+) + 2 H2O = 6 Fe(II)-[cytochrome c] + nitrite + 8 H(+). Its pathway is nitrogen metabolism; nitrate reduction (assimilation). In terms of biological role, catalyzes the reduction of nitrite to ammonia, consuming six electrons in the process. This chain is Cytochrome c-552, found in Haemophilus influenzae (strain 86-028NP).